Reading from the N-terminus, the 379-residue chain is MSTEGKVITCKAAVAWEAKKPLVIEDIEVQPPQKGEVRIKILYTGVCHTDSYTLSGSDPEGIFPCILGHEGGGIVESIGEGVTSVKVGDHVIPLYIPECGTCKFCTSNKTNLCSKIRITQGKGQMPDGTTRFKCKGKEIFHFMGTSTFSQYTVLPEISCCVVREDAPLDKVCLLGCGITTGFGAAKITAKVEEGSTVAIFGLGAVGLSVAQGAVDCGAKRIIGIDNNETKFGPGKDFGCTEFINPSKDLPEGKTIQQHLVDITDGGVDYSFECIGNVNVMRAALECCHKGWGVSTIVGVAPAGAEISTRPFQLVTGRVWKGSAFGGVKSRSQLPSIIDKYMDKKLKVDEYVTFTYPLNEINTAFDVMHEGKSLRSVVNL.

Zn(2+)-binding residues include Cys47, His69, Cys99, Cys102, Cys105, Cys113, and Cys176.

The protein belongs to the zinc-containing alcohol dehydrogenase family. Class-III subfamily. As to quaternary structure, homodimer. Zn(2+) is required as a cofactor.

It localises to the cytoplasm. The enzyme catalyses a primary alcohol + NAD(+) = an aldehyde + NADH + H(+). It carries out the reaction a secondary alcohol + NAD(+) = a ketone + NADH + H(+). It catalyses the reaction S-(hydroxymethyl)glutathione + NADP(+) = S-formylglutathione + NADPH + H(+). The catalysed reaction is S-(hydroxymethyl)glutathione + NAD(+) = S-formylglutathione + NADH + H(+). Its function is as follows. Class-III ADH is remarkably ineffective in oxidizing ethanol, but it readily catalyzes the oxidation of long-chain primary alcohols and the oxidation of S-(hydroxymethyl) glutathione. The sequence is that of Alcohol dehydrogenase class-3 (adh5) from Dictyostelium discoideum (Social amoeba).